The following is a 1475-amino-acid chain: Amylopullulanase (1475 aa).

A signal peptide spans 1 to 31 (MFKRRALGFLLAFLLVFTAVFGSMPMEFAKA). Positions 245, 247, 285, 340, 398, 400, 403, 404, 449, and 451 each coordinate Ca(2+). The substrate site is built by H524 and R627. D629 serves as the catalytic Nucleophile. The Proton donor role is filled by E658. Substrate is bound by residues 734–735 (HD), D794, and R798. Fibronectin type-III domains are found at residues 928–1019 (APQP…PAFP) and 1164–1257 (TPTA…TPDI). A CBM20 domain is found at 1255–1362 (PDIIPIKVTF…VNDTVQRWRD (108 aa)).

Belongs to the glycosyl hydrolase 13 family. The cofactor is Ca(2+).

The enzyme catalyses Endohydrolysis of (1-&gt;4)-alpha-D-glucosidic linkages in polysaccharides containing three or more (1-&gt;4)-alpha-linked D-glucose units.. The catalysed reaction is Hydrolysis of (1-&gt;6)-alpha-D-glucosidic linkages in pullulan, amylopectin and glycogen, and in the alpha- and beta-limit dextrins of amylopectin and glycogen.. This chain is Amylopullulanase (apu), found in Thermoanaerobacter thermohydrosulfuricus (Clostridium thermohydrosulfuricum).